We begin with the raw amino-acid sequence, 115 residues long: U3-lycotoxin-Ls1r (115 aa).

The signal sequence occupies residues M1 to A20. Residues E21–R44 constitute a propeptide that is removed on maturation. 4 disulfide bridges follow: C48–C63, C55–C72, C62–C87, and C74–C85.

It belongs to the neurotoxin 19 (CSTX) family. 01 subfamily. In terms of tissue distribution, expressed by the venom gland.

It is found in the secreted. The sequence is that of U3-lycotoxin-Ls1r from Lycosa singoriensis (Wolf spider).